The sequence spans 415 residues: Succinate--CoA ligase [GDP-forming] subunit beta, mitochondrial (415 aa).

The N-terminal 19 residues, 1-19 (MLRAAGNLSKSMMKSQRRF), are a transit peptide targeting the mitochondrion. The ATP-grasp domain occupies 28–258 (KEILEKHGCS…SAAYRQKEIF (231 aa)). GTP-binding positions include Gln-39, 72-74 (GRG), and Val-130. Residues Asn-227 and Asp-241 each coordinate Mg(2+). Residues Asn-292 and 349-351 (GIV) contribute to the substrate site.

It belongs to the succinate/malate CoA ligase beta subunit family. GTP-specific subunit beta subfamily. Heterodimer of an alpha and a beta subunit. The beta subunit determines specificity for GTP. It depends on Mg(2+) as a cofactor.

It localises to the mitochondrion. It carries out the reaction GTP + succinate + CoA = succinyl-CoA + GDP + phosphate. The protein operates within carbohydrate metabolism; tricarboxylic acid cycle; succinate from succinyl-CoA (ligase route): step 1/1. GTP-specific succinyl-CoA synthetase functions in the citric acid cycle (TCA), coupling the hydrolysis of succinyl-CoA to the synthesis of GTP and thus represents the only step of substrate-level phosphorylation in the TCA. The beta subunit provides nucleotide specificity of the enzyme and binds the substrate succinate, while the binding sites for coenzyme A and phosphate are found in the alpha subunit. The sequence is that of Succinate--CoA ligase [GDP-forming] subunit beta, mitochondrial from Caenorhabditis elegans.